The primary structure comprises 229 residues: Putative N-acetylmannosamine-6-phosphate 2-epimerase (229 aa).

Belongs to the NanE family.

It catalyses the reaction an N-acyl-D-glucosamine 6-phosphate = an N-acyl-D-mannosamine 6-phosphate. Its pathway is amino-sugar metabolism; N-acetylneuraminate degradation; D-fructose 6-phosphate from N-acetylneuraminate: step 3/5. Its function is as follows. Converts N-acetylmannosamine-6-phosphate (ManNAc-6-P) to N-acetylglucosamine-6-phosphate (GlcNAc-6-P). This Salmonella arizonae (strain ATCC BAA-731 / CDC346-86 / RSK2980) protein is Putative N-acetylmannosamine-6-phosphate 2-epimerase.